The sequence spans 167 residues: NADPH-dependent 7-cyano-7-deazaguanine reductase (167 aa).

The disordered stretch occupies residues 1-24; that stretch reads MTTRSQDQTRDLKVLGTGRLTSPE. The active-site Thioimide intermediate is the C57. The active-site Proton donor is D64. Substrate contacts are provided by residues 79 to 81 and 98 to 99; these read VES and ME.

It belongs to the GTP cyclohydrolase I family. QueF type 1 subfamily.

Its subcellular location is the cytoplasm. It carries out the reaction 7-aminomethyl-7-carbaguanine + 2 NADP(+) = 7-cyano-7-deazaguanine + 2 NADPH + 3 H(+). It participates in tRNA modification; tRNA-queuosine biosynthesis. In terms of biological role, catalyzes the NADPH-dependent reduction of 7-cyano-7-deazaguanine (preQ0) to 7-aminomethyl-7-deazaguanine (preQ1). The chain is NADPH-dependent 7-cyano-7-deazaguanine reductase from Desulfovibrio desulfuricans (strain ATCC 27774 / DSM 6949 / MB).